The sequence spans 424 residues: MKNEKLYREALQVMPGGVNSPVRAFKAVGGKPIFLVKGRGPRVWDAEGNEYIDFLASWGAIILGHAPKKVVKAVQEEAEKGLSFGLTNPHEVTLAKLVVEMVPSVEKVRFVNSGTEATMSAVRLARGVTGRKYIVKFEGCYHGHYDSLLVSAGSGVATFGIPGTPGIPEEIAKLTIVLPYNDVQALEEAFKEYGSEIAGVIVEPIAGNMGVVPPKKEFLIRLRELTKEYGSLLMFDEVITGFRLSKGGAQELFGIEPDITCLGKILGGGLPVGAYGGRREIMERVAPEGEVYQAGTLAGNPLAMVSGSETLKDLRDKEPYKELEEKMEKLARGVKDILTEKGIQHTINKVGSMMTVFFTDKKVVDFQTAKTSDTELFAKFFRALLNKGVLIPPSQFEAWFLTTAHEEEVIDEALERIRDAVKEL.

K264 carries the N6-(pyridoxal phosphate)lysine modification.

The protein belongs to the class-III pyridoxal-phosphate-dependent aminotransferase family. HemL subfamily. In terms of assembly, homodimer. It depends on pyridoxal 5'-phosphate as a cofactor.

It is found in the cytoplasm. The enzyme catalyses (S)-4-amino-5-oxopentanoate = 5-aminolevulinate. It participates in porphyrin-containing compound metabolism; protoporphyrin-IX biosynthesis; 5-aminolevulinate from L-glutamyl-tRNA(Glu): step 2/2. The polypeptide is Glutamate-1-semialdehyde 2,1-aminomutase (hemL) (Aquifex aeolicus (strain VF5)).